The following is a 497-amino-acid chain: Probable cytosol aminopeptidase (497 aa).

Mn(2+) contacts are provided by Lys264 and Asp269. The active site involves Lys276. The Mn(2+) site is built by Asp287, Asp346, and Glu348. Arg350 is a catalytic residue.

The protein belongs to the peptidase M17 family. It depends on Mn(2+) as a cofactor.

The protein localises to the cytoplasm. The enzyme catalyses Release of an N-terminal amino acid, Xaa-|-Yaa-, in which Xaa is preferably Leu, but may be other amino acids including Pro although not Arg or Lys, and Yaa may be Pro. Amino acid amides and methyl esters are also readily hydrolyzed, but rates on arylamides are exceedingly low.. The catalysed reaction is Release of an N-terminal amino acid, preferentially leucine, but not glutamic or aspartic acids.. Presumably involved in the processing and regular turnover of intracellular proteins. Catalyzes the removal of unsubstituted N-terminal amino acids from various peptides. This chain is Probable cytosol aminopeptidase, found in Persephonella marina (strain DSM 14350 / EX-H1).